The following is a 523-amino-acid chain: La-related protein 1C (523 aa).

A compositionally biased stretch (low complexity) spans 1–16; the sequence is MASATSNNPASSSMSP. Disordered regions lie at residues 1–52 and 95–313; these read MASA…VRGE and AAGD…VRHP. Residue Ala-2 is modified to N-acetylalanine. The segment covering 22-31 has biased composition (polar residues); the sequence is NHGSPTASVA. Low complexity-rich tracts occupy residues 32–44 and 146–169; these read QSPR…VSSP and SNKS…ASSS. Ser-33 carries the post-translational modification Phosphoserine. Composition is skewed to polar residues over residues 206–270 and 282–305; these read QRNG…NGNH and HGNQ…SQRG. Positions 363–452 constitute an HTH La-type RNA-binding domain; it reads HYQDPPLHMK…RDNWQNWVLR (90 aa). Positions 474–523 are disordered; that stretch reads GNLSVDQSSADPIGGSSSQLQPTEALSDDQQQSSSTAPVSNHNAPDGANR. Polar residues predominate over residues 477-516; it reads SVDQSSADPIGGSSSQLQPTEALSDDQQQSSSTAPVSNHN.

The protein belongs to the LARP family. In terms of tissue distribution, age-dependent accumulation in rosette leaves.

The protein localises to the cytoplasm. Its function is as follows. Promotes leaf senescence mediated by abscisic acid (ABA), salicylic acid (SA) and jasmonic acid (MeJA), probably though the induction of expression of senescence-associated genes (SAGs) and defense-related genes. The polypeptide is La-related protein 1C (LARP1C) (Arabidopsis thaliana (Mouse-ear cress)).